A 54-amino-acid polypeptide reads, in one-letter code: Light-harvesting protein B-870 beta chain (54 aa).

At 1-20 (EVKQESLSGITEGEAKEFHK) the chain is on the cytoplasmic side. His-19 and His-37 together coordinate a bacteriochlorophyll. The helical transmembrane segment at 21–43 (IFTSSILVFFGVAAFAHLLVWIW) threads the bilayer. The Periplasmic segment spans residues 44–54 (RPWVPGPNGYS).

This sequence belongs to the antenna complex beta subunit family. The core complex is formed by different alpha and beta chains, binding bacteriochlorophyll molecules, and arranged most probably in tetrameric structures disposed around the reaction center. The non-pigmented gamma chains may constitute additional components.

It localises to the cell inner membrane. Antenna complexes are light-harvesting systems, which transfer the excitation energy to the reaction centers. The polypeptide is Light-harvesting protein B-870 beta chain (Rhodospirillum rubrum).